A 362-amino-acid chain; its full sequence is GDSL esterase/lipase 6 (362 aa).

An N-terminal signal peptide occupies residues 1 to 23; that stretch reads MSSSSSMDLLMCLLLLISPVVLA. Serine 38 serves as the catalytic Nucleophile. Residues asparagine 50, asparagine 103, asparagine 107, asparagine 195, and asparagine 296 are each glycosylated (N-linked (GlcNAc...) asparagine). Active-site residues include aspartate 323 and histidine 326.

It belongs to the 'GDSL' lipolytic enzyme family.

The protein resides in the secreted. This chain is GDSL esterase/lipase 6 (GLIP6), found in Arabidopsis thaliana (Mouse-ear cress).